Consider the following 309-residue polypeptide: MEFHFFGTGSGVPSIERNVSACAVRFLQQRGKQWLFDCGEATQHQILRSSIALGKIERIFITHLHGDHIFGLPGLLGSRSFQGGENPLFLYGPKGIRSFVETALQVSNTHVKYELTIEEFSEPGLLFHEEGFKVETILLDHVMPCYAFKVTEDDRPGELLVDRLKAKGVPPGPLYRKIQQGETVELPTGERLEANAFLGPPKRGRSFVLAGDTRPVKELIPFAKNVNVLIHEATFLDDKKGHAHEYGHSTMADAIQLAKQANVDHLILTHISSRYHDMSDELQKKAQNAFANAVVAHDFYVFHLPLAKG.

Residues H63, H65, D67, H68, H141, D212, and H270 each contribute to the Zn(2+) site. D67 functions as the Proton acceptor in the catalytic mechanism.

This sequence belongs to the RNase Z family. As to quaternary structure, homodimer. Requires Zn(2+) as cofactor.

The enzyme catalyses Endonucleolytic cleavage of RNA, removing extra 3' nucleotides from tRNA precursor, generating 3' termini of tRNAs. A 3'-hydroxy group is left at the tRNA terminus and a 5'-phosphoryl group is left at the trailer molecule.. Zinc phosphodiesterase, which displays some tRNA 3'-processing endonuclease activity. Probably involved in tRNA maturation, by removing a 3'-trailer from precursor tRNA. The polypeptide is Ribonuclease Z (Halalkalibacterium halodurans (strain ATCC BAA-125 / DSM 18197 / FERM 7344 / JCM 9153 / C-125) (Bacillus halodurans)).